The following is a 23-amino-acid chain: Augerpeptide hhe7a (23 aa).

Disulfide bonds link cysteine 3–cysteine 11, cysteine 6–cysteine 19, and cysteine 10–cysteine 22.

Expressed by the venom duct.

It localises to the secreted. In terms of biological role, causes abnormal twist followed by immobility when injected into C.elegans. This is Augerpeptide hhe7a from Hastula hectica (Sea snail).